A 436-amino-acid chain; its full sequence is Glutamyl-tRNA reductase (436 aa).

Substrate-binding positions include 49–52, S109, 114–116, and Q120; these read TCNR and EPQ. C50 acts as the Nucleophile in catalysis. 189-194 contacts NADP(+); it reads GAGEMC.

The protein belongs to the glutamyl-tRNA reductase family. Homodimer.

It carries out the reaction (S)-4-amino-5-oxopentanoate + tRNA(Glu) + NADP(+) = L-glutamyl-tRNA(Glu) + NADPH + H(+). Its pathway is porphyrin-containing compound metabolism; protoporphyrin-IX biosynthesis; 5-aminolevulinate from L-glutamyl-tRNA(Glu): step 1/2. In terms of biological role, catalyzes the NADPH-dependent reduction of glutamyl-tRNA(Glu) to glutamate 1-semialdehyde (GSA). The sequence is that of Glutamyl-tRNA reductase from Pelobacter propionicus (strain DSM 2379 / NBRC 103807 / OttBd1).